The chain runs to 93 residues: Em protein H2 (93 aa).

The tract at residues 1-93 (MASGQQERSQ…IDESKFKTKS (93 aa)) is disordered. Composition is skewed to basic and acidic residues over residues 9-19 (SQLDRKAREGE), 31-52 (LEAHENLAEGRSRGGQTRREQM), and 73-93 (GGERAAREGIDIDESKFKTKS).

The protein belongs to the small hydrophilic plant seed protein family.

It is thought to provide protection for the cytoplasm during the desiccation stage of embryo development. The protein is Em protein H2 (EMH2) of Triticum aestivum (Wheat).